The chain runs to 246 residues: Probable transcriptional regulatory protein Pden_1905 (246 aa).

Residues 1 to 21 (MAGHSKWANIQHRKGKQDKLR) form a disordered region.

This sequence belongs to the TACO1 family.

It is found in the cytoplasm. The sequence is that of Probable transcriptional regulatory protein Pden_1905 from Paracoccus denitrificans (strain Pd 1222).